A 230-amino-acid polypeptide reads, in one-letter code: Octanoyltransferase (230 aa).

One can recognise a BPL/LPL catalytic domain in the interval 38–215; the sequence is AGGADTLLLL…AVCAALDGVL (178 aa). Residues 76 to 83, 145 to 147, and 158 to 160 contribute to the substrate site; these read RGGKITWH, AIG, and GFA. Cys-176 acts as the Acyl-thioester intermediate in catalysis.

This sequence belongs to the LipB family.

It is found in the cytoplasm. It carries out the reaction octanoyl-[ACP] + L-lysyl-[protein] = N(6)-octanoyl-L-lysyl-[protein] + holo-[ACP] + H(+). The protein operates within protein modification; protein lipoylation via endogenous pathway; protein N(6)-(lipoyl)lysine from octanoyl-[acyl-carrier-protein]: step 1/2. Its function is as follows. Catalyzes the transfer of endogenously produced octanoic acid from octanoyl-acyl-carrier-protein onto the lipoyl domains of lipoate-dependent enzymes. Lipoyl-ACP can also act as a substrate although octanoyl-ACP is likely to be the physiological substrate. The chain is Octanoyltransferase from Mycobacterium tuberculosis (strain ATCC 25177 / H37Ra).